The sequence spans 232 residues: Thiamine import ATP-binding protein ThiQ (232 aa).

The 229-residue stretch at 2–230 (LKLTDITWLY…KASASALLGI (229 aa)) folds into the ABC transporter domain. An ATP-binding site is contributed by 32-39 (GPSGAGKS).

This sequence belongs to the ABC transporter superfamily. Thiamine importer (TC 3.A.1.19.1) family. In terms of assembly, the complex is composed of two ATP-binding proteins (ThiQ), two transmembrane proteins (ThiP) and a solute-binding protein (ThiB).

It localises to the cell inner membrane. It carries out the reaction thiamine(out) + ATP + H2O = thiamine(in) + ADP + phosphate + H(+). In terms of biological role, part of the ABC transporter complex ThiBPQ involved in thiamine import. Responsible for energy coupling to the transport system. The chain is Thiamine import ATP-binding protein ThiQ from Escherichia coli O157:H7.